The sequence spans 131 residues: MALSDSIGDFLTRIRNAQLAMHRATRVLFSKMNSSILEILKEEGYILDYEKQVVDNLPSFIVKLKYYEKSPVISDIVRVSKPGCRRYSKYKDISKAYNGLGIFIISTPKGVMTDYNAHKLKVGGEVLCRVF.

The protein belongs to the universal ribosomal protein uS8 family. Part of the 30S ribosomal subunit. Contacts proteins S5 and S12.

Functionally, one of the primary rRNA binding proteins, it binds directly to 16S rRNA central domain where it helps coordinate assembly of the platform of the 30S subunit. This is Small ribosomal subunit protein uS8 from Wolbachia pipientis wMel.